Consider the following 341-residue polypeptide: DNA-directed RNA polymerase subunit alpha (341 aa).

An alpha N-terminal domain (alpha-NTD) region spans residues 1–237 (MLSLSKNWNA…EQLQLFISFE (237 aa)). The interval 252-341 (FSPYLLKRVD…LSKRYEDSYN (90 aa)) is alpha C-terminal domain (alpha-CTD).

Belongs to the RNA polymerase alpha chain family. In terms of assembly, homodimer. The RNAP catalytic core consists of 2 alpha, 1 beta, 1 beta' and 1 omega subunit. When a sigma factor is associated with the core the holoenzyme is formed, which can initiate transcription.

The enzyme catalyses RNA(n) + a ribonucleoside 5'-triphosphate = RNA(n+1) + diphosphate. In terms of biological role, DNA-dependent RNA polymerase catalyzes the transcription of DNA into RNA using the four ribonucleoside triphosphates as substrates. This Rickettsia bellii (strain OSU 85-389) protein is DNA-directed RNA polymerase subunit alpha.